Here is a 221-residue protein sequence, read N- to C-terminus: 3-phospho-D-glycerate guanylyltransferase (221 aa).

Belongs to the CofC family.

It carries out the reaction (2R)-3-phosphoglycerate + GTP + H(+) = 3-[(R)-glyceryl]-diphospho-5'-guanosine + diphosphate. It catalyses the reaction (2S)-2-phospholactate + GTP + H(+) = (2S)-lactyl-2-diphospho-5'-guanosine + diphosphate. Its pathway is cofactor biosynthesis; coenzyme F420 biosynthesis. In terms of biological role, guanylyltransferase that catalyzes the activation of (2R)-3-phosphoglycerate (3PG) as 3-[(R)-glyceryl]-diphospho-5'-guanosine, via the condensation of 3PG with GTP. It is involved in the biosynthesis of a derivative of the hydride carrier cofactor coenzyme F420, 3PG-F420. Can also use (2S)-2-phospholactate (2-PL), with lower turnover, and has weak activity with phosphoenolpyruvate (PEP). The chain is 3-phospho-D-glycerate guanylyltransferase from Mycetohabitans rhizoxinica (strain DSM 19002 / CIP 109453 / HKI 454) (Paraburkholderia rhizoxinica).